Reading from the N-terminus, the 272-residue chain is uncharacterized protein (272 aa).

The protein belongs to the chlamydial CPn_0389/CT_041/TC_0311 family.

This is an uncharacterized protein from Chlamydia pneumoniae (Chlamydophila pneumoniae).